We begin with the raw amino-acid sequence, 285 residues long: Bifunctional protein FolD 2 (285 aa).

NADP(+)-binding positions include 164-166 (GRS), S189, and V230.

The protein belongs to the tetrahydrofolate dehydrogenase/cyclohydrolase family. As to quaternary structure, homodimer.

It catalyses the reaction (6R)-5,10-methylene-5,6,7,8-tetrahydrofolate + NADP(+) = (6R)-5,10-methenyltetrahydrofolate + NADPH. The enzyme catalyses (6R)-5,10-methenyltetrahydrofolate + H2O = (6R)-10-formyltetrahydrofolate + H(+). Its pathway is one-carbon metabolism; tetrahydrofolate interconversion. In terms of biological role, catalyzes the oxidation of 5,10-methylenetetrahydrofolate to 5,10-methenyltetrahydrofolate and then the hydrolysis of 5,10-methenyltetrahydrofolate to 10-formyltetrahydrofolate. The sequence is that of Bifunctional protein FolD 2 from Geobacter sulfurreducens (strain ATCC 51573 / DSM 12127 / PCA).